The primary structure comprises 285 residues: RNA polymerase sigma factor RpoH (285 aa).

Positions 53–122 (LILSHLRFVA…IHEYVLRNWR (70 aa)) are sigma-70 factor domain-2. The short motif at 77 to 80 (DLIQ) is the Interaction with polymerase core subunit RpoC element. The interval 229–281 (ALEGLDERSQHIIRARWLDDDNKSTLQELADQYGVSAERVRQLEKNAMKKLKM) is sigma-70 factor domain-4. Residues 254–273 (LQELADQYGVSAERVRQLEK) constitute a DNA-binding region (H-T-H motif).

It belongs to the sigma-70 factor family. RpoH subfamily. In terms of assembly, interacts with the RNA polymerase core enzyme.

The protein resides in the cytoplasm. Sigma factors are initiation factors that promote the attachment of RNA polymerase to specific initiation sites and are then released. This sigma factor is involved in regulation of expression of heat shock genes. The sequence is that of RNA polymerase sigma factor RpoH from Serratia marcescens.